The primary structure comprises 368 residues: Glutamate 5-kinase (368 aa).

Lysine 13 contributes to the ATP binding site. Substrate is bound by residues serine 54, aspartate 141, and asparagine 153. 173–174 (SD) provides a ligand contact to ATP. In terms of domain architecture, PUA spans 278–355 (RGEITVDAGA…AEIEAVLGYP (78 aa)).

The protein belongs to the glutamate 5-kinase family.

The protein localises to the cytoplasm. The enzyme catalyses L-glutamate + ATP = L-glutamyl 5-phosphate + ADP. Its pathway is amino-acid biosynthesis; L-proline biosynthesis; L-glutamate 5-semialdehyde from L-glutamate: step 1/2. In terms of biological role, catalyzes the transfer of a phosphate group to glutamate to form L-glutamate 5-phosphate. This is Glutamate 5-kinase from Dinoroseobacter shibae (strain DSM 16493 / NCIMB 14021 / DFL 12).